A 270-amino-acid chain; its full sequence is tRNA pseudouridine synthase A (270 aa).

D51 acts as the Nucleophile in catalysis. Y109 is a substrate binding site.

The protein belongs to the tRNA pseudouridine synthase TruA family. Homodimer.

It carries out the reaction uridine(38/39/40) in tRNA = pseudouridine(38/39/40) in tRNA. Formation of pseudouridine at positions 38, 39 and 40 in the anticodon stem and loop of transfer RNAs. The protein is tRNA pseudouridine synthase A of Variovorax paradoxus (strain S110).